The chain runs to 1038 residues: DNA polymerase delta catalytic subunit (1038 aa).

A disordered region spans residues 1 to 29 (MSHSIPITSSPPPALKKLKLPNGSEEPSE). Zn(2+) is bound by residues C942, C945, C958, and C961. A CysA-type zinc finger spans residues 942-961 (CVSCRTPLKKDNLGALCPNC). Residues C992, C995, C1005, and C1010 each contribute to the [4Fe-4S] cluster site. The CysB motif signature appears at 992–1010 (CQRCQGSLHQEVLCSNKDC).

It belongs to the DNA polymerase type-B family. Heterodimer with subunits of 125 kDa and 50 kDa. The 125 kDa subunit contains the polymerase active site and most likely the active site for the 3'-5' exonuclease activity. Requires [4Fe-4S] cluster as cofactor.

It localises to the nucleus. The catalysed reaction is DNA(n) + a 2'-deoxyribonucleoside 5'-triphosphate = DNA(n+1) + diphosphate. This polymerase possesses two enzymatic activities: DNA synthesis (polymerase) and an exonucleolytic activity that degrades single-stranded DNA in the 3'- to 5'-direction. The polypeptide is DNA polymerase delta catalytic subunit (POL3) (Candida albicans (Yeast)).